We begin with the raw amino-acid sequence, 1372 residues long: DNA-directed RNA polymerase subunit beta' (1372 aa).

Zn(2+) is bound by residues cysteine 69, cysteine 71, cysteine 84, and cysteine 87. Mg(2+) is bound by residues aspartate 460, aspartate 462, and aspartate 464. Positions 808, 882, 889, and 892 each coordinate Zn(2+).

The protein belongs to the RNA polymerase beta' chain family. In terms of assembly, the RNAP catalytic core consists of 2 alpha, 1 beta, 1 beta' and 1 omega subunit. When a sigma factor is associated with the core the holoenzyme is formed, which can initiate transcription. Mg(2+) is required as a cofactor. Requires Zn(2+) as cofactor.

It catalyses the reaction RNA(n) + a ribonucleoside 5'-triphosphate = RNA(n+1) + diphosphate. Its function is as follows. DNA-dependent RNA polymerase catalyzes the transcription of DNA into RNA using the four ribonucleoside triphosphates as substrates. This chain is DNA-directed RNA polymerase subunit beta', found in Rickettsia bellii (strain OSU 85-389).